Here is a 338-residue protein sequence, read N- to C-terminus: Phenylalanine--tRNA ligase alpha subunit (338 aa).

Glu-253 contacts Mg(2+).

The protein belongs to the class-II aminoacyl-tRNA synthetase family. Phe-tRNA synthetase alpha subunit type 1 subfamily. As to quaternary structure, tetramer of two alpha and two beta subunits. Requires Mg(2+) as cofactor.

It is found in the cytoplasm. It carries out the reaction tRNA(Phe) + L-phenylalanine + ATP = L-phenylalanyl-tRNA(Phe) + AMP + diphosphate + H(+). The polypeptide is Phenylalanine--tRNA ligase alpha subunit (Geobacter metallireducens (strain ATCC 53774 / DSM 7210 / GS-15)).